Reading from the N-terminus, the 196-residue chain is Phosphoheptose isomerase (196 aa).

The SIS domain maps to 38–196; that stretch reads LIAGYRAGAR…VEHALFAPRQ (159 aa). Position 53–55 (53–55) interacts with substrate; the sequence is NGG. Zn(2+) is bound by residues histidine 62 and glutamate 66. Residues glutamate 66, 95–96, 121–123, serine 126, and glutamine 173 contribute to the substrate site; these read ND and STS. Zn(2+)-binding residues include glutamine 173 and histidine 181.

It belongs to the SIS family. GmhA subfamily. Zn(2+) is required as a cofactor.

Its subcellular location is the cytoplasm. The catalysed reaction is 2 D-sedoheptulose 7-phosphate = D-glycero-alpha-D-manno-heptose 7-phosphate + D-glycero-beta-D-manno-heptose 7-phosphate. It participates in carbohydrate biosynthesis; D-glycero-D-manno-heptose 7-phosphate biosynthesis; D-glycero-alpha-D-manno-heptose 7-phosphate and D-glycero-beta-D-manno-heptose 7-phosphate from sedoheptulose 7-phosphate: step 1/1. In terms of biological role, catalyzes the isomerization of sedoheptulose 7-phosphate in D-glycero-D-manno-heptose 7-phosphate. This is Phosphoheptose isomerase from Mycobacterium bovis (strain ATCC BAA-935 / AF2122/97).